We begin with the raw amino-acid sequence, 547 residues long: Chaperonin GroEL (547 aa).

ATP is bound by residues 30-33 (TLGP), Lys51, 87-91 (DGTTT), Gly415, 479-481 (NAA), and Asp495.

The protein belongs to the chaperonin (HSP60) family. In terms of assembly, forms a cylinder of 14 subunits composed of two heptameric rings stacked back-to-back. Interacts with the co-chaperonin GroES.

The protein resides in the cytoplasm. It catalyses the reaction ATP + H2O + a folded polypeptide = ADP + phosphate + an unfolded polypeptide.. In terms of biological role, together with its co-chaperonin GroES, plays an essential role in assisting protein folding. The GroEL-GroES system forms a nano-cage that allows encapsulation of the non-native substrate proteins and provides a physical environment optimized to promote and accelerate protein folding. The chain is Chaperonin GroEL from Pseudomonas paraeruginosa (strain DSM 24068 / PA7) (Pseudomonas aeruginosa (strain PA7)).